We begin with the raw amino-acid sequence, 494 residues long: MNAPVKPSKLIKGATGDWEVVIGLEIHAQVSSNAKLFSGAATAFGGDQNTHVSLVDAAMPGMLPVINEECVRQAIRSGLGLNAKIHLRSVFDRKNYFYPDLPQGYQISQYKSPIVGEGEVVVDLPDGDSITVGIERLHLEQDAGKLLHDQHPTSTFVDLNRSGVALMEIVSKPDLRSSEQAKAYVSKLRTIMRYLGTCDGDMEKGSLRADVNVSVRRPGEPYGTRCEIKNVNSIRFIGQAIEYEARRQIGILEDGGTIDQETRLFDANKGETRSMRSKEEAHDYRYFPDPDLLPLEFTQAYVDDLKAGLPELPDAKKERFVHDFGLSVEDAGVLVSERESAEFYEAVLAQLKDQGRDGKLAANWVINELFGRLNKDGQSIDASPVSAAQLAAIVELIGEGTISGKIAKELFEIVWTEGGDPRTLVEQRGMKQVTDLSAIEKVVDDIVAANPDKVAQVVAKPAMLGWFVGQVMKSSGGKANPQAVNDLLKRKLGL.

Belongs to the GatB/GatE family. GatB subfamily. Heterotrimer of A, B and C subunits.

The catalysed reaction is L-glutamyl-tRNA(Gln) + L-glutamine + ATP + H2O = L-glutaminyl-tRNA(Gln) + L-glutamate + ADP + phosphate + H(+). It catalyses the reaction L-aspartyl-tRNA(Asn) + L-glutamine + ATP + H2O = L-asparaginyl-tRNA(Asn) + L-glutamate + ADP + phosphate + 2 H(+). Functionally, allows the formation of correctly charged Asn-tRNA(Asn) or Gln-tRNA(Gln) through the transamidation of misacylated Asp-tRNA(Asn) or Glu-tRNA(Gln) in organisms which lack either or both of asparaginyl-tRNA or glutaminyl-tRNA synthetases. The reaction takes place in the presence of glutamine and ATP through an activated phospho-Asp-tRNA(Asn) or phospho-Glu-tRNA(Gln). In Rhodopseudomonas palustris (strain ATCC BAA-98 / CGA009), this protein is Aspartyl/glutamyl-tRNA(Asn/Gln) amidotransferase subunit B.